The chain runs to 255 residues: Aliphatic sulfonates import ATP-binding protein SsuB (255 aa).

Positions 12-233 (LLLNAVSKHY…RLGSVRLAEL (222 aa)) constitute an ABC transporter domain. 44–51 (GRSGGGKS) contributes to the ATP binding site.

Belongs to the ABC transporter superfamily. Aliphatic sulfonates importer (TC 3.A.1.17.2) family. As to quaternary structure, the complex is composed of two ATP-binding proteins (SsuB), two transmembrane proteins (SsuC) and a solute-binding protein (SsuA).

The protein localises to the cell inner membrane. It carries out the reaction ATP + H2O + aliphatic sulfonate-[sulfonate-binding protein]Side 1 = ADP + phosphate + aliphatic sulfonateSide 2 + [sulfonate-binding protein]Side 1.. Its function is as follows. Part of the ABC transporter complex SsuABC involved in aliphatic sulfonates import. Responsible for energy coupling to the transport system. The protein is Aliphatic sulfonates import ATP-binding protein SsuB of Shigella sonnei (strain Ss046).